Here is a 127-residue protein sequence, read N- to C-terminus: Large ribosomal subunit protein uL18 (127 aa).

It belongs to the universal ribosomal protein uL18 family. As to quaternary structure, part of the 50S ribosomal subunit; part of the 5S rRNA/L5/L18/L25 subcomplex. Contacts the 5S and 23S rRNAs.

Functionally, this is one of the proteins that bind and probably mediate the attachment of the 5S RNA into the large ribosomal subunit, where it forms part of the central protuberance. The sequence is that of Large ribosomal subunit protein uL18 from Streptomyces griseus subsp. griseus (strain JCM 4626 / CBS 651.72 / NBRC 13350 / KCC S-0626 / ISP 5235).